The chain runs to 157 residues: Cell cycle regulator of non-homologous end joining (157 aa).

At Met-1 the chain carries N-acetylmethionine. Positions 1 to 21 match the KBM motif; the sequence is METLKSKTKTRVLPSWMTAPV. Basic and acidic residues predominate over residues 80-91; it reads KPWEQRSLEATD. The disordered stretch occupies residues 80-148; sequence KPWEQRSLEA…EEEKEEEDAL (69 aa). Residues 96–106 show a composition bias toward low complexity; sequence SPPCSSSPGSS. Positions 147-157 match the XLM motif; that stretch reads ALKYVREIFFS.

As to quaternary structure, interacts (via KBM motif) with XRCC5/Ku80 and XRCC6/Ku70 heterodimer. Interacts (via XLF motif) with TRIM28/KAP1, ATM, MRE11, NBN and RAD50. Interacts with splicing factor SF3B1. Interacts with ERCC6L2; this interaction is DNA independent.

The protein resides in the cytoplasm. The protein localises to the nucleus. Its subcellular location is the chromosome. Functionally, cell-cycle-specific regulator of classical non-homologous end joining (NHEJ) of DNA double-strand break (DSB) repair, which can act both as an activator or inhibitor of NHEJ, depending on the cell cycle phase. Acts as a regulator of DNA repair pathway choice by specifically inhibiting classical NHEJ during the S and G2 phases, thereby promoting error-free repair by homologous recombination during cell cycle phases when sister chromatids are present. Preferentially protects single-stranded overhangs at break sites by inhibiting classical NHEJ, thereby creating a local environment that favors homologous recombination. Acts via interaction with XRCC5/Ku80 and XRCC6/Ku70. In contrast, acts as an activator of NHEJ during G1 phase of the cell cycle: promotes classical NHEJ in G1 phase cells via multivalent interactions that increase the affinity of DNA damage response proteins for DSB-associated chromatin. Also involved in immunoglobulin V(D)J recombination. May also act as an indirect regulator of proteasome. The polypeptide is Cell cycle regulator of non-homologous end joining (Mus musculus (Mouse)).